Reading from the N-terminus, the 115-residue chain is U17-barytoxin-Tl1b (115 aa).

The N-terminal stretch at 1-20 is a signal peptide; the sequence is MKTIIVFLSLLVLATKFGDA. Positions 21–74 are excised as a propeptide; the sequence is KEGVNQKQKKEVTQNEFREEYLNEMAAMSLVQQLEAIERALFENEAGRNSRQKR. 3 disulfides stabilise this stretch: cysteine 75–cysteine 89, cysteine 82–cysteine 94, and cysteine 88–cysteine 109.

It belongs to the neurotoxin 14 (magi-1) family. 03 (ICK-30-40) subfamily. In terms of tissue distribution, expressed by the venom gland.

It localises to the secreted. Ion channel inhibitor. The chain is U17-barytoxin-Tl1b from Trittame loki (Brush-footed trapdoor spider).